The chain runs to 697 residues: MMEELHSLDPRRQELLEARFTGVGVAKGSGHNESSNQSLCSVGSLSDKELETPEKKSNDQRTRKRKGDPFDSQGKGGGRGHKISDYFEFAGGSGTGTSPARGIPPVARSSPQHSLSNPPAAVQQGSPSSISSVNTDHSHTSTSHKPASIHTQHRASQSELTMEKLAALESSKSSDLEKKEGRIDDLLRVNCDLRRQIDEQQKMLEWCKERLNKCVTMSKKLLIEKSKQEKIACREKSMQDRLRLGHFTTVRHGASFTEQWTDGYAFQNLVKQQERVNGQREEIERQRKLLIKKKPPSASQTPPPNLEPNKRKSKSNGAENEMLSLAEYHEQEEIFKLRLGHLKKEEAEIQVELERLERVRNLHIRELKRIHNEDNSQFKDHPTLNDRYLLLHLLGRGGFSEVYKAFDLTEQRYVAVKIHQLNKNWRDEKKENYHKHACREYRIHKELDHPRIVKLYDYFSLDTDSFCTVLEYCEGNDLDFYLKQHKLMSEKEARSIIMQVVNALKYLNEIRPPIIHYDLKPGNILLVNGTACGEIKITDFGLSKIMDDDNYGVDGMELTSQGAGTYWYLPPECFVVGKEPPKISNKVDVWSVGVIFYQCLYGKKPFGHNQSQQDILQENTILKATEVQFPPKPGVSPEAKAFIRRCLVYRKEDRIDVHQLASDPYLLPHIRKSVAATGNSSMAVASTSNSSNSSASN.

Disordered stretches follow at residues 25–159 and 288–316; these read VAKG…SQSE and KLLIKKKPPSASQTPPPNLEPNKRKSKSN. Positions 31–44 are enriched in polar residues; the sequence is HNESSNQSLCSVGS. Basic and acidic residues predominate over residues 46–61; the sequence is SDKELETPEKKSNDQR. The segment covering 109-145 has biased composition (polar residues); sequence SSPQHSLSNPPAAVQQGSPSSISSVNTDHSHTSTSHK. Coiled coils occupy residues 265-294 and 336-373; these read AFQNLVKQQERVNGQREEIERQRKLLIKKK and KLRLGHLKKEEAEIQVELERLERVRNLHIRELKRIHNE. The Protein kinase domain occupies 388–666; the sequence is YLLLHLLGRG…VHQLASDPYL (279 aa). Residues 394–402 and Lys-417 contribute to the ATP site; that span reads LGRGGFSEV. Asp-518 (proton acceptor) is an active-site residue.

This sequence belongs to the protein kinase superfamily. Ser/Thr protein kinase family. Monomer. May form homodimers; homodimerization may enhance autophosphoylation and enzymatic activity. Heterodimer with TLK1. Requires Mg(2+) as cofactor. Post-translationally, phosphorylated. Autophosphorylated; phosphorylation promotes the assembly of higher order oligomers and enzymatic activity.

The protein resides in the nucleus. It localises to the nucleoplasm. The protein localises to the cytoplasm. It is found in the perinuclear region. Its subcellular location is the cytoskeleton. It catalyses the reaction L-seryl-[protein] + ATP = O-phospho-L-seryl-[protein] + ADP + H(+). It carries out the reaction L-threonyl-[protein] + ATP = O-phospho-L-threonyl-[protein] + ADP + H(+). Functionally, serine/threonine-protein kinase involved in the process of chromatin assembly and probably also DNA replication, transcription, repair, and chromosome segregation. Negative regulator of amino acid starvation-induced autophagy. The chain is Serine/threonine-protein kinase tousled-like 2 from Danio rerio (Zebrafish).